Consider the following 518-residue polypeptide: GMP synthase [glutamine-hydrolyzing] (518 aa).

The region spanning 13-203 (KIIVLDFGSQ…ALNVCGCKGD (191 aa)) is the Glutamine amidotransferase type-1 domain. The Nucleophile role is filled by C90. Active-site residues include H177 and E179. In terms of domain architecture, GMPS ATP-PPase spans 204 to 393 (WTMENFSEVE…LGMPDAIVWR (190 aa)). 231-237 (SGGVDSS) is an ATP binding site.

As to quaternary structure, homodimer.

It catalyses the reaction XMP + L-glutamine + ATP + H2O = GMP + L-glutamate + AMP + diphosphate + 2 H(+). It functions in the pathway purine metabolism; GMP biosynthesis; GMP from XMP (L-Gln route): step 1/1. Its function is as follows. Catalyzes the synthesis of GMP from XMP. The polypeptide is GMP synthase [glutamine-hydrolyzing] (Listeria welshimeri serovar 6b (strain ATCC 35897 / DSM 20650 / CCUG 15529 / CIP 8149 / NCTC 11857 / SLCC 5334 / V8)).